Reading from the N-terminus, the 91-residue chain is Large ribosomal subunit protein bL27 (91 aa).

The segment at 1 to 20 is disordered; sequence MAHKKGVGSSKNGRDSNPKY.

It belongs to the bacterial ribosomal protein bL27 family.

The sequence is that of Large ribosomal subunit protein bL27 from Deinococcus geothermalis (strain DSM 11300 / CIP 105573 / AG-3a).